A 176-amino-acid chain; its full sequence is Deoxyuridine 5'-triphosphate nucleotidohydrolase (176 aa).

Residues 67 to 69 (RSG), asparagine 80, 84 to 86 (TVD), and lysine 94 each bind substrate. The segment at 141–176 (GGFGSTGGHASVDGAEGGITHGGNSYASVVSDREGQ) is disordered.

It belongs to the dUTPase family. Mg(2+) is required as a cofactor.

It carries out the reaction dUTP + H2O = dUMP + diphosphate + H(+). The protein operates within pyrimidine metabolism; dUMP biosynthesis; dUMP from dCTP (dUTP route): step 2/2. Its function is as follows. This enzyme is involved in nucleotide metabolism: it produces dUMP, the immediate precursor of thymidine nucleotides and it decreases the intracellular concentration of dUTP so that uracil cannot be incorporated into DNA. The protein is Deoxyuridine 5'-triphosphate nucleotidohydrolase of Streptomyces griseus subsp. griseus (strain JCM 4626 / CBS 651.72 / NBRC 13350 / KCC S-0626 / ISP 5235).